Here is a 154-residue protein sequence, read N- to C-terminus: MLLAYTRLSHIHGNIDDSITLDHDTRKKARIKSTTDTGIDIGVFLERGHPLLVGEILKTECGKFIVVKGKAEDVATAIADDWLSFSKICYHLGNRHTSLQIGERWVRFKPDHVLEELAENYGLSINKTPAVFEPESGAYGKSGHNHGHSHSHED.

The interval 134–154 (PESGAYGKSGHNHGHSHSHED) is disordered. Positions 143-154 (GHNHGHSHSHED) are enriched in basic residues.

It belongs to the UreE family.

The protein localises to the cytoplasm. Functionally, involved in urease metallocenter assembly. Binds nickel. Probably functions as a nickel donor during metallocenter assembly. This is Urease accessory protein UreE from Alteromonas mediterranea (strain DSM 17117 / CIP 110805 / LMG 28347 / Deep ecotype).